The following is a 50-amino-acid chain: Small ribosomal subunit protein eS31 (50 aa).

Cys22, Cys25, Cys40, and Cys43 together coordinate Zn(2+). Residues Cys22–Cys43 form a C4-type zinc finger.

It belongs to the eukaryotic ribosomal protein eS31 family. In terms of assembly, part of the 30S ribosomal subunit. The cofactor is Zn(2+).

The polypeptide is Small ribosomal subunit protein eS31 (Pyrococcus horikoshii (strain ATCC 700860 / DSM 12428 / JCM 9974 / NBRC 100139 / OT-3)).